The following is a 7094-amino-acid chain: MSKINKYGLELHWAPEFPWMFEDAEEKLDNPSSSEVDIVCSTTAQKLETGGICPENHVMVDCRRLLKQECCVQSSLIREIVMNTRPYDLEVLLQDALQSREAVLVTPPLGMSLEACYVRGCNPNGWTMGLFRRRSVCNTGRCAVNKHVAYQLYMIDPAGVCFGAGQFVGWVIPLAFMPVQSRKFIVPWVMYLRKCGEKGAYNKDHKRGGFEHVYNFKVEDAYDLVHDEPKGKFSKKAYALIRGYRGVKPLLYVDQYGCDYTGGLADGLEAYADKTLQEMKALFPIWSQELPFDVTVAWHVVRDPRYVMRLQSASTIRSVAYVANPTEDLCDGSVVIKEPVHVYADDSIILRQHNLVDIMSCFYMEADAVVNAFYGVDLKDCGFVMQFGYIDCEQDLCDFKGWVPGNMIDGFACTTCGHVYETGDLLAQSSGVLPVNPVLHTKSAAGYGGFGCKDSFTLYGQTVVYFGGCVYWSPARNIWIPILKSSVKSYDGLVYTGVVGCKAIVKETNLICKALYLDYVQHKCGNLHQRELLGVSDVWHKQLLLNRGVYKPLLENIDYFNMRRAKFSLETFTVCADGFMPFLLDDLVPRAYYLAVSGQAFCDYADKICHAVVSKSKELLDVSLDSLSAAIHYLNSKIVDLAQHFSDFGTSFVSKIVHFFKTFTTSTALAFAWVLFHVLHGAYIVVESDIYFVKNIPRYASAVAQAFRSVAKVVLDSLRVTFIDGLSCFKIGRRRICLSGSKIYEVERGLLHSSQLPLDVYDLTMPSQVQKAKQKPIYLKGSGSDFSLADSVVEVVTTSLTPCGYSEPPKVADKICIVDNVYMAKAGDKYYPVVVDGHVGLLDQAWRVPCAGRRVTFKEQPTVNEIASTPKTIKVFYELDKDFNTILNTACGVFEVDDTVDMEEFYAVVIDAIEEKLSPCKELEGVGAKVSAFLQKLEDNSLFLFDEAGEEVLASKLYCAFTAPEDDDFLEESGVEEDDVEGEETDLTVTSAGEPCVASEQEESSEILEDTLDDGPCVETSDSQVEEDVEMSDFADLESVIQDYENVCFEFYTTEPEFVKVLDLYVPKATRNNCWLRSVLAVMQKLPCQFKDKNLQDLWVLYKQQYSQLFVDTLVNKIPANIVVPQGGYVADFAYWFLTLCDWQCVAYWKCIKCDLALKLKGLDAMFFYGDVVSHVCKCGESMVLIDVDVPFTAHFALKDKLFCAFITKRSVYKAACVVDVNDSHSMAVVDGKQIDDHRVTSITSDKFDFIIGHGMSFSMTTFEIAQLYGSCITPNVCFVKGDIIKVSKRVKAEVVVNPANGHMAHGGGVAKAIAVAAGQQFVKETTDMVKSKGVCATGDCYVSTGGKLCKTVLNVVGPDARTQGKQSYALLERVYKHLNKYDCVVTTLISAGIFSVPSDVSLTYLLGTAEKQVVLVSNNQEDFDLISKCQITAVEGTKKLAERLSFNVGRSIVYETDANKLILSNDVAFVSTFNVLQDVLSLRHDIALDDDARTFVQSNVDVVPEGWRVVNKFYQINGVRTVKYFECPGGIDICSQDKVFGYVQQGSFNKATVAQIKALFLDKVDILLTVDGVNFTNRFVPVGESFGKSLGNVFCDGVNVTKHKCDINYKGKVFFQFDNLSSEDLKAVRSSFNFDQKELLAYYNMLVNCSKWQVVFNGKYFTFKQANNNCFVNVSCLMLQSLNLKFKIVQWQEAWLEFRSGRPARFVSLVLAKGGFKFGDPADSRDFLRVVFSQVDLTGAICDFEIACKCGVKQEQRTGVDAVMHFGTLSREDLEIGYTVDCSCGKKLIHCVRFDVPFLICSNTPASVKLPKGVGSANIFKGDKVGHYVHVKCEQSYQLYDASNVKKVTDVTGNLSDCLYLKNLKQTFKSVLTTYYLDDVKKIEYNPDLSQYYCDGGKYYTQRIIKAQFKTFEKVDGVYTNFKLIGHTICDILNAKLGFDSSKEFVEYKVTEWPTATGDVVLATDDLYVKRYERGCITFGKPVIWLSHEQASLNSLTYFNRPLLVDENKFDVLKVDDVDDGGDISESDAKESKEINIIKLSGVKKPFKVEDSVIVNDDTSEIKYVKSLSIVDVYDMWLTGCRYVVRTANALSMAVNVPTIRKFIKFGMTLVSIPIDLLNLREIKPVFNVVKAVRNKISACFNFIKWLFVLLFGWIKISADNKVIYTTEVASKLTCKLVALAFKNAFLTFKWSVVARGACIIATIFLLWFNFIYANVIFSDFYLPKIGFLPTFVGKIAQWIKSTFSLVTICDLYSIQDVGFKNQYCNGSIACQFCLAGFDMLDNYKAIDVVQYEADRRAFVDYTGVLKIVIELIVSYALYTAWFYPLFALISIQILTTWLPELFMLSTLHWSVRLLVSLANMLPAHVFMRFYIIIASFIKLFILFRHVAYGCSKPGCLFCYKRNRSLRVKCSTIVGGMIRYYDVMANGGTGFCSKHQWNCIDCDSYKPGNTFITVEAALDLSKELKRPIQPTDVAYHTVTDVKQVGCYMRLFYERDGQRTYDDVNASLFVDYSNLLHSKVKGVPNMHVVVVENDADKANFLNAAVFYAQSLFRPILMVDKNLITTANTGTSVTETMFDVYVDTFLSMFDVDKKSLNALIATAHSSIKQGTQICKVLDTFLSCARKSCSIDSDVDTKCLADSVMSAVSAGLELTDESCNNLVPTYLKGDNIVAADLGVLIQNSAKHVQGNVAKIAGVSCIWSVDAFNQLSSDFQHKLKKACCKTGLKLKLTYNKQMANVSVLTTPFSLKGGAVFSYFVYVCFLLSLVCFIGLWCLMPTYTVHKSDFQLPVYASYKVLDNGVIRDVSVEDVCFANKFEQFDQWYESTFGLSYYSNSMACPIVVAVVDQDLGSTVFNVPTKVLRYGYHVLHFITHALSADGVQCYTPHSQISYSNFYASGCVLSSACTMFAMADGSPQPYCYTEGLMQNASLYSSLVPHVRYNLANAKGFIRFPEVLREGLVRIVRTRSMSYCRVGLCEEADEGICFNFNGSWVLNNDYYRSLPGTFCGRDVFDLIYQLFKGLAQPVDFLALTASSIAGAILAVIVVLVFYYLIKLKRAFGDYTSIVFVNVIVWCVNFMMLFVFQVYPTLSCVYAICYFYATLYFPSEISVIMHLQWLVMYGTIMPLWFCLLYISVVVSNHAFWVFAYCRRLGTSVRSDGTFEEMALTTFMITKDSYCKLKNSLSDVAFNRYLSLYNKYRYYSGKMDTAAYREAACSQLAKAMDTFTNNNGSDVLYQPPTASVSTSFLQSGIVKMVNPTSKVEPCIVSVTYGNMTLNGLWLDDKVYCPRHVICSASDMTNPDYTNLLCRVTSSDFTVLFDRLSLTVMSYQMQGCMLVLTVTLQNSRTPKYTFGVVKPGETFTVLAAYNGKPQGAFHVTMRSSYTIKGSFLCGSCGSVGYVLMGDCVKFVYMHQLELSTGCHTGTDFNGDFYGPYKDAQVVQLPVQDYIQSVNFVAWLYAAILNNCNWFVQSDKCSVEDFNVWALSNGFSQVKSDLVIDALASMTGVSLETLLAAIKRLKNGFQGRQIMGSCSFEDELTPSDVYQQLAGIKLQSKRTRLVKGIVCWIMASTFLFSCIITAFVKWTMFMYVTTNMLSITFCALCVISLAMLLVKHKHLYLTMYIIPVLFTLLYNNYLVVYKQTFRGYVYAWLSYYVPSVEYTYTDEVIYGMLLLIGMVFVTLRSINHDLFSFIMFVGRVISVVSLWYMGSNLEEEILLMLASLFGTYTWTTALSMAAAKVIAKWVAVNVLYFTDIPQIKIVLVCYLFIGYIISCYWGLFSLMNSLFRMPLGVYNYKISVQELRYMNANGLRPPKNSFEALMLNFKLLGIGGVPIIEVSQFQSKLTDVKCANVVLLNCLQHLHVASNSKLWQYCSTLHNEILATSDLGVAFEKLAQLLIVLFANPAAVDSKCLTSIEEVCDDYAKDNTVLQALQSEFVNMASFVEYEVAKKNLDEARSSGSANQQQLKQLEKACNIAKSAYERDRAVARKLERMADLALTNMYKEARINDKKSKVVSALQTMLFSMVRKLDNQALNSILDNAVKGCVPLNAIPSLAANTLTIIVPDKSVYDQVVDNVYVTYAGNVWQIQTIQDSDGTNKQLNEISDDCNWPLVIIANRHNEVSATVLQNNELMPAKLKTQVVNSGPDQTCNTPTQCYYNNSNNGKIVYAILSDVDGLKYTKILKDDGNFVVLELDPPCKFTVQDVKGLKIKYLYFVKGCNTLARGWVVGTISSTVRLQAGTATEYASNSSILSLCAFSVDPKKTYLDFIQQGGTPIANCVKMLCDHAGTGMAITVKPDATTNQDSYGGASVCIYCRARVEHPDVDGLCKLRGKFVQVPVGIKDPVSYVLTHDVCQVCGFWRDGSCSCVSTDTTVQSKDTNFLNRVRGTSVDARLVPCASGLSTDVQLRAFDICNASVAGIGLHLKVNCCRFQRVDENGDKLDQFFVVKRTDLTIYNREMECYERVKDCKFVAEHDFFTFDVEGSRVPHIVRKDLTKYTMLDLCYALRHFDRNDCMLLCDILSIYAGCEQSYFTKKDWYDFVENPDIINVYKKLGPIFNRALVSATEFADKLVEVGLVGILTLDNQDLNGKWYDFGDYVIAAPGCGVAIADSYYSYMMPMLTMCHALDCELYVNNAYRLFDLVQYDFTDYKLELFNKYFKHWSMPYHPNTVDCQDDRCIIHCANFNILFSMVLPNTCFGPLVRQIFVDGVPFVVSIGYHYKELGIVMNMDVDTHRYRLSLKDLLLYAADPALHVASASALYDLRTCCFSVAAITSGVKFQTVKPGNFNQDFYDFILSKGLLKEGSSVDLKHFFFTQDGNAAITDYNYYKYNLPTMVDIKQLLFVLEVVYKYFEIYDGGCIPASQVIVNNYDKSAGYPFNKFGKARLYYEALSFEEQDEIYAYTKRNVLPTLTQMNLKYAISAKNRARTVAGVSILSTMTGRMFHQKCLKSIAATRGVPVVIGTTKFYGGWDDMLRRLIKDVDNPVLMGWDYPKCDRAMPNILRIVSSLVLARKHEACCSQSDRFYRLANECAQVLSEIVMCGGCYYVKPGGTSSGDATTAFANSVFNICQAVSANVCALMSCNGNKIEDLSIRALQKRLYSHVYRSDMVDSTFVTEYYEFLNKHFSMMILSDDGVVCYNSDYASKGYIANISAFQQVLYYQNNVFMSESKCWVENDINNGPHEFCSQHTMLVKMDGDDVYLPYPDPSRILGAGCFVDDLLKTDSVLLIERFVSLAIDAYPLVYHENEEYQKVFRVYLEYIKKLYNDLGNQILDSYSVILSTCDGQKFTDESFYKNMYLRSAVMQSVGACVVCSSQTSLRCGSCIRKPLLCCKCCYDHVMATDHKYVLSVSPYVCNAPGCDVNDVTKLYLGGMSYYCEDHKPQYSFKLVMNGMVFGLYKQSCTGSPYIDDFNRIASCKWTDVDDYILANECTERLKLFAAETQKATEEAFKQSYASATIQEIVSERELILSWEIGKVKPPLNKNYVFTGYHFTKNGKTVLGEYVFDKSELTNGVYYRATTTYKLSVGDVFVLTSHSVANLSAPTLVPQENYSSIRFASVYSVLETFQNNVVNYQHIGMKRYCTVQGPPGTGKSHLAIGLAVYYCTARVVYTAASHAAVDALCEKAYKFLNINDCTRIVPAKVRVECYDKFKINDTTRKYVFTTINALPEMVTDIVVVDEVSMLTNYELSVINARIRAKHYVYIGDPAQLPAPRVLLSKGTLEPKYFNTVTKLMCCLGPDIFLGTCYRCPKEIVDTVSALVYENKLKAKNESSSLCFKVYYKGVTTHESSSAVNMQQIYLINKFLKANPLWHKAVFISPYNSQNFAAKRVLGLQTQTVDSAQGSEYDYVIYSQTAETAHSVNVNRFNVAITRAKKGILCVMSNMQLFEALQFTTLTLDKVPQAVETRVQCSTNLFKDCSKSYSGYHPAHAPSFLAVDDKYKATGDLAVCLGIGDSAVTYSRLISLMGFKLDVTLDGYCKLFITKEEAVKRVRAWVGFDAEGAHATRDSIGTNFPLQLGFSTGIDFVVEATGLFADRDGYSFKKAVAKAPPGEQFKHLIPLMTRGQRWDVVRPRIVQMFADHLIDLSDCVVLVTWAANFELTCLRYFAKVGREISCNVCTKRATAYNSRTGYYGCWRHSVTCDYLYNPLIVDIQQWGYIGSLSSNHDLYCSVHKGAHVASSDAIMTRCLAVYDCFCNNINWNVEYPIISNELSINTSCRVLQRVMLKAAMLCNRYTLCYDIGNPKAIACVKDFDFKFYDAQPIVKSVKTLLYSFEAHKDSFKDGLCMFWNCNVDKYPPNAVVCRFDTRVLNNLNLPGCNGGSLYVNKHAFHTKPFSRAAFEHLKPMPFFYYSDTPCVYMDGMDAKQVDYVPLKSATCITRCNLGGAVCLKHAEEYREYLESYNTATTAGFTFWVYKTFDFYNLWNTFTKLQSLENVVYNLVKTGHYTGQAGEMPCAIINDKVVAKIDKEDVVIFINNTTYPTNVAVELFAKRSIRHHPELKLFRNLNIDVCWKHVIWDYARESIFCSNTYGVCMYTDLKFIDKLNVLFDGRDNGALEAFKRSNNGVYISTTKVKSLSMIKGPPRAELNGVVVDKVGDTDCVFYFAVRKEGQDVIFSQFDSLRVSSNQSPQGNLGSNEPGNVGGNDALATSTIFTQSRVISSFTCRTDMEKDFIALDQDLFIQKYGLEDYAFEHIVYGNFNQKIIGGLHLLIGLYRRQQTSNLVIQEFVSYDSSIHSYFITDEKSGGSKSVCTVIDILLDDFVALVKSLNLNCVSKVVNVNVDFKDFQFMLWCNDEKVMTFYPRLQAASDWKPGYSMPVLYKYLNSPMERVSLWNYGKPVTLPTGCMMNVAKYTQLCQYLNTTTLAVPVNMRVLHLGAGSEKGVAPGSAVLRQWLPAGTILVDNDLYPFVSDSVATYFGDCITLPFDCQWDLIISDMYDPITKNIGEYNVSKDGFFTYICHMIRDKLALGGSVAIKITEFSWNAELYKLMGYFAFWTVFCTNANASSSEGFLIGINYLGKPKVEIDGNVMHANYLFWRNSTVWNGGAYSLFDMAKFPLKLAGTAVINLRADQINDMVYSLLEKGKLLVRDTNKEVFVGDSLVNVI.

Residues 54–196 (PENHVMVDCR…PWVMYLRKCG (143 aa)) enclose the CoV Nsp1 globular domain. The 31-residue stretch at 216-246 (FKVEDAYDLVHDEPKGKFSKKAYALIRGYRG) folds into the BetaCoV Nsp1 C-terminal domain. Residues 250–519 (LLYVDQYGCD…LICKALYLDY (270 aa)) form the CoV Nsp2 N-terminal domain. Positions 392, 397, 413, and 416 each coordinate Zn(2+). The C4 stretch occupies residues 392 to 416 (CEQDLCDFKGWVPGNMIDGFACTTC). The CoV Nsp2 middle domain maps to 524 to 713 (CGNLHQRELL…AQAFRSVAKV (190 aa)). The CoV Nsp2 C-terminal domain occupies 733–851 (RRRICLSGSK…LDQAWRVPCA (119 aa)). In terms of domain architecture, Ubiquitin-like 1 spans 853-966 (RRVTFKEQPT…LYCAFTAPED (114 aa)). The Peptidase C16 1 domain occupies 1036–1274 (DLESVIQDYE…IAQLYGSCIT (239 aa)). The active-site For PL1-PRO activity is the Cys1074. Positions 1151, 1154, 1177, and 1179 each coordinate Zn(2+). The C4-type 1 zinc-finger motif lies at 1151–1179 (CIKCDLALKLKGLDAMFFYGDVVSHVCKC). Residues His1225 and Asp1236 each act as for PL1-PRO activity in the active site. The Macro domain maps to 1275 to 1435 (PNVCFVKGDI…LISKCQITAV (161 aa)). The DPUP domain occupies 1491–1563 (DDARTFVQSN…VAQIKALFLD (73 aa)). A Ubiquitin-like 2 domain is found at 1562–1617 (LDKVDILLTVDGVNFTNRFVPVGESFGKSLGNVFCDGVNVTKHKCDINYKGKVFFQ). The Peptidase C16 2 domain maps to 1631–1892 (SSFNFDQKEL…KIEYNPDLSQ (262 aa)). Cys1671 (for PL2-PRO activity) is an active-site residue. Zn(2+) contacts are provided by Cys1749, Cys1751, Cys1783, and Cys1785. The C4-type 2 zinc-finger motif lies at 1749 to 1785 (CKCGVKQEQRTGVDAVMHFGTLSREDLEIGYTVDCSC). Catalysis depends on for PL2-PRO activity residues His1828 and Asp1842. Residues 1906–2007 (IKAQFKTFEK…TYFNRPLLVD (102 aa)) form the Nucleic acid-binding domain. The G2M domain occupies 2020-2169 (DDGGDISESD…ADNKVIYTTE (150 aa)). 3 helical membrane-spanning segments follow: residues 2138-2158 (ISAC…WIKI), 2199-2219 (ACII…NVIF), and 2227-2247 (IGFL…TFSL). An HD1 region spans residues 2138–2385 (ISACFNFIKW…ASFIKLFILF (248 aa)). One can recognise a 3Ecto domain in the interval 2235–2296 (GKIAQWIKST…AIDVVQYEAD (62 aa)). 2 disulfide bridges follow: Cys2251/Cys2275 and Cys2266/Cys2272. A run of 3 helical transmembrane segments spans residues 2313–2333 (LIVS…LISI), 2343–2363 (LFML…ANML), and 2365–2385 (AHVF…FILF). The interval 2383–2473 (ILFRHVAYGC…ELKRPIQPTD (91 aa)) is Y1. One can recognise a CoV Nsp3 Y domain in the interval 2383–2750 (ILFRHVAYGC…LTTPFSLKGG (368 aa)). His2387, Cys2392, Cys2397, Cys2400, Cys2433, His2436, Cys2440, and Cys2443 together coordinate Zn(2+). The tract at residues 2387–2400 (HVAYGCSKPGCLFC) is ZF1. Positions 2433-2443 (CSKHQWNCIDC) are ZF2. A Y2 region spans residues 2474–2566 (VAYHTVTDVK…MVDKNLITTA (93 aa)). Residues 2474–2750 (VAYHTVTDVK…LTTPFSLKGG (277 aa)) form a coV-Y region. The Y3 stretch occupies residues 2567–2649 (NTGTSVTETM…DSVMSAVSAG (83 aa)). Positions 2650–2750 (LELTDESCNN…LTTPFSLKGG (101 aa)) are Y4. 7 helical membrane passes run 2752-2772 (VFSY…IGLW), 2824-2844 (STFG…VAVV), 3009-3029 (VFDL…FLAL), 3031-3051 (ASSI…YYLI), 3063-3083 (IVFV…VFQV), 3090-3110 (VYAI…SVIM), and 3115-3135 (LVMY…SVVV). Residues 2752 to 3135 (VFSYFVYVCF…FCLLYISVVV (384 aa)) are HD2. Residues 3149–3246 (LGTSVRSDGT…TASVSTSFLQ (98 aa)) enclose the Nsp4C domain. The 303-residue stretch at 3247-3549 (SGIVKMVNPT…YQQLAGIKLQ (303 aa)) folds into the Peptidase C30 domain. Active-site for 3CL-PRO activity residues include His3287 and Cys3391. The next 7 helical transmembrane spans lie at 3558–3578 (GIVC…TAFV), 3588–3608 (TNML…MLLV), 3614–3634 (YLTM…YLVV), 3657–3677 (TYTD…FVTL), 3684–3704 (LFSF…WYMG), 3711–3731 (ILLM…LSMA), and 3755–3775 (IVLV…GLFS). An HD3 region spans residues 3558–3775 (GIVCWIMAST…IISCYWGLFS (218 aa)). Positions 3837 to 3925 (SKLTDVKCAN…DYAKDNTVLQ (89 aa)) constitute a RdRp Nsp7 cofactor domain. Positions 3926 to 4122 (ALQSEFVNMA…HNEVSATVLQ (197 aa)) constitute a RdRp Nsp8 cofactor domain. A Nsp9 ssRNA-binding domain is found at 4123 to 4232 (NNELMPAKLK…GTISSTVRLQ (110 aa)). The 138-residue stretch at 4233–4370 (AGTATEYASN…CVSTDTTVQS (138 aa)) folds into the ExoN/MTase coactivator domain. The Zn(2+) site is built by Cys4306, Cys4309, His4315, Cys4322, Cys4348, Cys4351, Cys4359, and Cys4361. 2 zinc fingers span residues 4306–4322 (CIYC…DGLC) and 4348–4361 (CQVC…SCSC). The 256-residue stretch at 4375-4630 (FLNRVRGTSV…DCELYVNNAY (256 aa)) folds into the NiRAN domain. Positions 4578 and 4587 each coordinate Mn(2+). In terms of domain architecture, Nsp12 Interface spans 4631-4729 (RLFDLVQYDF…MNMDVDTHRY (99 aa)). Residues His4660, Cys4666, Cys4671, Cys4675, and Cys4852 each contribute to the Zn(2+) site. In terms of domain architecture, Nsp12 RNA-dependent RNA polymerase spans 4730-5297 (RLSLKDLLLY…NMYLRSAVMQ (568 aa)). A rdRp Fingers N-ter region spans residues 4732–4946 (SLKDLLLYAA…HQKCLKSIAA (215 aa)). Residues 4947 to 4985 (TRGVPVVIGTTKFYGGWDDMLRRLIKDVDNPVLMGWDYP) form a rdRp Palm N-ter region. The region spanning 4977–5139 (PVLMGWDYPK…CYNSDYASKG (163 aa)) is the RdRp catalytic domain. Residues 4986-5044 (KCDRAMPNILRIVSSLVLARKHEACCSQSDRFYRLANECAQVLSEIVMCGGCYYVKPGG) are rdRp Fingers C-ter. 3 residues coordinate Zn(2+): His5007, Cys5010, and Cys5011. A rdRp Palm C-ter region spans residues 5045–5180 (TSSGDATTAF…NNGPHEFCSQ (136 aa)). Residues Ser5124, Asp5125, and Asp5126 contribute to the active site. A rdRp Thumb region spans residues 5181 to 5297 (HTMLVKMDGD…NMYLRSAVMQ (117 aa)). The CV ZBD domain maps to 5298–5410 (SVGACVVCSS…DDFNRIASCK (113 aa)). Positions 5302, 5305, 5313, 5316, 5323, 5326, 5330, 5336, 5347, 5352, 5369, and 5372 each coordinate Zn(2+). The region spanning 5553-5734 (SVLETFQNNV…MCCLGPDIFL (182 aa)) is the (+)RNA virus helicase ATP-binding domain. 5578 to 5585 (GPPGTGKS) provides a ligand contact to ATP. The 170-residue stretch at 5735–5904 (GTCYRCPKEI…VETRVQCSTN (170 aa)) folds into the (+)RNA virus helicase C-terminal domain. An ExoN domain is found at 5971–6186 (LFITKEEAVK…RCLAVYDCFC (216 aa)). Residues Asp5989, Glu5991, and Glu6090 contribute to the active site. Zn(2+)-binding residues include Cys6106, Cys6109, Cys6125, His6128, His6156, Cys6160, and His6163. Active-site residues include His6167 and Asp6172. Cys6178 contributes to the Zn(2+) binding site. Residues 6195–6421 (YPIISNELSI…NLWNTFTKLQ (227 aa)) form the N7-MTase domain. Residue 6230 to 6236 (DIGNPKA) coordinates S-adenosyl-L-methionine. Positions 6308–6322 (CNGGSLYVNKHAFHT) are gpppA-binding. Zn(2+) contacts are provided by Cys6346, Cys6367, Cys6378, and His6381. Positions 6422 to 6482 (SLENVVYNLV…NVAVELFAKR (61 aa)) constitute a Nsp15 N-terminal oligomerization domain. Residues 6483–6603 (SIRHHPELKL…FAVRKEGQDV (121 aa)) enclose the AV-Nsp11N/CoV-Nsp15M domain. Residues 6653–6792 (TCRTDMEKDF…NDEKVMTFYP (140 aa)) enclose the NendoU domain. Residues His6683, His6698, Lys6738, Lys6841, Asp6925, Lys6965, and Glu6998 contribute to the active site. The Nidovirus-type SAM-dependent 2'-O-MTase domain occupies 6797–7091 (ASDWKPGYSM…KEVFVGDSLV (295 aa)).

It belongs to the coronaviruses polyprotein 1ab family. Interacts with host PHB and PHB2. In terms of assembly, interacts with papain-like protease nsp3 and non-structural protein 6. As to quaternary structure, monomer. Homodimer. Only the homodimer shows catalytic activity. Interacts with nsp8 and nsp12 to form the replication-transcription complex (RTC): nsp12, nsp7, two subunits of nsp8, and up to two subunits of nsp13. In terms of assembly, interacts with nsp7, nsp13 and nsp12 to form the replication-transcription complex (RTC): nsp12, nsp7, two subunits of nsp8, and up to two subunits of nsp13. As to quaternary structure, interacts with nsp12. Interacts with proofreading exoribonuclease nsp14 and 2'-O-methyltransferase nsp16; these interactions enhance nsp14 and nsp16 enzymatic activities. In terms of assembly, interacts with nsp7 and nsp8 to form the replication-transcription complex (RTC): nsp12, nsp7, two subunits of nsp8, and up to two subunits of nsp13. Interacts with nsp9. As to quaternary structure, interacts with nsp8 to form the replication-transcription complex (RTC): nsp12, nsp7, two subunits of nsp8, and up to two subunits of nsp13. The cofactor is Mn(2+). Requires Mg(2+) as cofactor. Post-translationally, specific enzymatic cleavages in vivo by its own proteases yield mature proteins. 3CL-PRO and PL-PRO proteinases are autocatalytically processed.

It localises to the host membrane. It is found in the host cytoplasm. The protein resides in the host perinuclear region. Its subcellular location is the host endoplasmic reticulum-Golgi intermediate compartment. It carries out the reaction RNA(n) + a ribonucleoside 5'-triphosphate = RNA(n+1) + diphosphate. It catalyses the reaction ATP + H2O = ADP + phosphate + H(+). The catalysed reaction is Thiol-dependent hydrolysis of ester, thioester, amide, peptide and isopeptide bonds formed by the C-terminal Gly of ubiquitin (a 76-residue protein attached to proteins as an intracellular targeting signal).. The enzyme catalyses a 5'-end (N(7)-methyl 5'-triphosphoguanosine)-ribonucleoside in mRNA + S-adenosyl-L-methionine = a 5'-end (N(7)-methyl 5'-triphosphoguanosine)-(2'-O-methyl-ribonucleoside) in mRNA + S-adenosyl-L-homocysteine + H(+). It carries out the reaction uridylyl-uridylyl-ribonucleotide-RNA = a 3'-end uridylyl-2',3'-cyclophospho-uridine-RNA + a 5'-end dephospho-ribonucleoside-RNA. It catalyses the reaction a 5'-end diphospho-ribonucleoside in mRNA + GTP + H(+) = a 5'-end (5'-triphosphoguanosine)-ribonucleoside in mRNA + diphosphate. The catalysed reaction is a 5'-end (5'-triphosphoguanosine)-ribonucleoside in mRNA + S-adenosyl-L-methionine = a 5'-end (N(7)-methyl 5'-triphosphoguanosine)-ribonucleoside in mRNA + S-adenosyl-L-homocysteine. Its function is as follows. The replicase polyprotein of coronaviruses is a multifunctional protein: it contains the activities necessary for the transcription of negative stranded RNA, leader RNA, subgenomic mRNAs and progeny virion RNA as well as proteinases responsible for the cleavage of the polyprotein into functional products. Functionally, inhibits host translation by interacting with the 40S ribosomal subunit. The nsp1-40S ribosome complex further induces an endonucleolytic cleavage near the 5'UTR of host mRNAs, targeting them for degradation. Viral mRNAs are not susceptible to nsp1-mediated endonucleolytic RNA cleavage thanks to the presence of a 5'-end leader sequence and are therefore protected from degradation. By suppressing host gene expression, nsp1 facilitates efficient viral gene expression in infected cells and evasion from host immune response. May play a role in the modulation of host cell survival signaling pathway by interacting with host PHB and PHB2. Indeed, these two proteins play a role in maintaining the functional integrity of the mitochondria and protecting cells from various stresses. In terms of biological role, responsible for the cleavages located at the N-terminus of the replicase polyprotein. In addition, PL-PRO possesses a deubiquitinating/deISGylating activity and processes both 'Lys-48'- and 'Lys-63'-linked polyubiquitin chains from cellular substrates. Participates together with nsp4 in the assembly of virally-induced cytoplasmic double-membrane vesicles necessary for viral replication. Antagonizes innate immune induction of type I interferon by blocking the phosphorylation, dimerization and subsequent nuclear translocation of host IRF3. Also prevents host NF-kappa-B signaling. Its function is as follows. Participates in the assembly of virally-induced cytoplasmic double-membrane vesicles necessary for viral replication. Functionally, cleaves the C-terminus of replicase polyprotein at 11 sites. Recognizes substrates containing the core sequence [ILMVF]-Q-|-[SGACN]. Also able to bind an ADP-ribose-1''-phosphate (ADRP). Plays a role in the initial induction of autophagosomes from host endoplasmic reticulum. Later, limits the expansion of these phagosomes that are no longer able to deliver viral components to lysosomes. In terms of biological role, forms a hexadecamer with nsp8 (8 subunits of each) that may participate in viral replication by acting as a primase. Alternatively, may synthesize substantially longer products than oligonucleotide primers. Its function is as follows. Forms a hexadecamer with nsp7 (8 subunits of each) that may participate in viral replication by acting as a primase. Alternatively, may synthesize substantially longer products than oligonucleotide primers. Functionally, forms a primer, NSP9-pU, which is utilized by the polymerase for the initiation of RNA chains. Interacts with ribosome signal recognition particle RNA (SRP). Together with NSP8, suppress protein integration into the cell membrane, thereby disrupting host immune defenses. Plays a pivotal role in viral transcription by stimulating both nsp14 3'-5' exoribonuclease and nsp16 2'-O-methyltransferase activities. Therefore plays an essential role in viral mRNAs cap methylation. In terms of biological role, RNA-directed RNA polymerase that catalyzes the transcription of viral genomic and subgenomic RNAs. Acts in complex with nsp7 and nsp8 to transcribe both the minus and positive strands of genomic RNA. The kinase-like NiRAN domain of NSP12 attaches one or more nucleotides to the amino terminus of NSP9, forming a covalent RNA-protein intermediate that serves as transcription/replication primer. Subgenomic RNAs (sgRNAs) are formed by discontinuous transcription: The polymerase has the ability to pause at transcription-regulating sequences (TRS) and jump to the leader TRS, resulting in a major deletion. This creates a series of subgenomic RNAs that are replicated, transcribed and translated. In addition, Nsp12 is a subunit of the viral RNA capping enzyme that catalyzes the RNA guanylyltransferase reaction for genomic and sub-genomic RNAs. Subsequently, the NiRAN domain transfers RNA to GDP, and forms the core cap structure GpppA-RNA. Its function is as follows. Multi-functional protein with a zinc-binding domain in N-terminus displaying RNA and DNA duplex-unwinding activities with 5' to 3' polarity. Activity of helicase is dependent on magnesium. Functionally, plays a role in viral RNA synthesis through two distinct activities. The N7-guanine methyltransferase activity plays a role in the formation of the cap structure GpppA-RNA. The proofreading exoribonuclease reduces the sensitivity of the virus to RNA mutagens during replication. This activity acts on both ssRNA and dsRNA in a 3'-5' direction. Plays a role in viral transcription/replication and prevents the simultaneous activation of host cell dsRNA sensors, such as MDA5/IFIH1, OAS, and PKR. Acts by degrading the 5'-polyuridines generated during replication of the poly(A) region of viral genomic and subgenomic RNAs. Catalyzes a two-step reaction in which a 2'3'-cyclic phosphate (2'3'-cP) is first generated by 2'-O transesterification, which is then hydrolyzed to a 3'-phosphate (3'-P). If not degraded, poly(U) RNA would hybridize with poly(A) RNA tails and activate host dsRNA sensors. In terms of biological role, methyltransferase that mediates mRNA cap 2'-O-ribose methylation to the 5'-cap structure of viral mRNAs. N7-methyl guanosine cap is a prerequisite for binding of nsp16. Therefore plays an essential role in viral mRNAs cap methylation which is essential to evade immune system. The chain is Replicase polyprotein 1ab (rep) from Bos taurus (Bovine).